The following is a 319-amino-acid chain: Acetyl esterase (319 aa).

The short motif at 91 to 93 is the Involved in the stabilization of the negatively charged intermediate by the formation of the oxyanion hole element; it reads HGG. Catalysis depends on residues Ser-165, Asp-262, and His-292.

Belongs to the 'GDXG' lipolytic enzyme family. Homodimer. Interacts with MalT and MelA.

It is found in the cytoplasm. Displays esterase activity towards short chain fatty esters (acyl chain length of up to 8 carbons). Able to hydrolyze triacetylglycerol (triacetin) and tributyrylglycerol (tributyrin), but not trioleylglycerol (triolein) or cholesterol oleate. Negatively regulates MalT activity by antagonizing maltotriose binding. Inhibits MelA galactosidase activity. This is Acetyl esterase from Escherichia coli O9:H4 (strain HS).